Reading from the N-terminus, the 377-residue chain is Putative F-box protein At3g13830 (377 aa).

The 47-residue stretch at 6 to 52 (TTTMSTLPMVLVDEILSRVPITSLRSLRSTCKRWEAQSKTNLVGGKA) folds into the F-box domain.

The polypeptide is Putative F-box protein At3g13830 (Arabidopsis thaliana (Mouse-ear cress)).